Consider the following 628-residue polypeptide: ATP-dependent zinc metalloprotease FtsH (628 aa).

Over 1–7 (MKLSWKT) the chain is Stromal. The helical transmembrane segment at 8 to 28 (LLLWSLPIFVIGFFFWQGFLG) threads the bilayer. Topologically, residues 29 to 118 (PTTTDVGSNI…AHPPKSTSAV (90 aa)) are lumenal. Residues 119–139 (WGLLGNLLFPLLLVGGLAFLF) traverse the membrane as a helical segment. At 140-628 (RRSNNASGGP…PEKNYYISQF (489 aa)) the chain is on the stromal side. Position 213 to 220 (213 to 220 (GPPGTGKT)) interacts with ATP. His434 is a Zn(2+) binding site. Glu435 is a catalytic residue. 2 residues coordinate Zn(2+): His438 and Asp512.

The protein in the central section; belongs to the AAA ATPase family. This sequence in the C-terminal section; belongs to the peptidase M41 family. In terms of assembly, homohexamer. Zn(2+) serves as cofactor.

The protein localises to the plastid. It is found in the chloroplast thylakoid membrane. In terms of biological role, acts as a processive, ATP-dependent zinc metallopeptidase. The sequence is that of ATP-dependent zinc metalloprotease FtsH from Pyropia yezoensis (Susabi-nori).